A 93-amino-acid chain; its full sequence is RNA-binding protein Hfq (93 aa).

Residues 9-68 (DPFLNALRKERIPVSIFLVNGIKLQGQIESFDQYVVLLKNAVSQMVYKHAISTVVPARNP) enclose the Sm domain. The segment covering 74 to 86 (PAMAAGATAAPAA) has biased composition (low complexity). Residues 74–93 (PAMAAGATAAPAADEGYGNQ) are disordered.

The protein belongs to the Hfq family. In terms of assembly, homohexamer.

RNA chaperone that binds small regulatory RNA (sRNAs) and mRNAs to facilitate mRNA translational regulation in response to envelope stress, environmental stress and changes in metabolite concentrations. Also binds with high specificity to tRNAs. In Alcanivorax borkumensis (strain ATCC 700651 / DSM 11573 / NCIMB 13689 / SK2), this protein is RNA-binding protein Hfq.